Reading from the N-terminus, the 125-residue chain is Glycine cleavage system H protein (125 aa).

Positions 23–104 (VVYIGITDYA…PYENWILKVK (82 aa)) constitute a Lipoyl-binding domain. At Lys-64 the chain carries N6-lipoyllysine.

It belongs to the GcvH family. The glycine cleavage system is composed of four proteins: P, T, L and H. (R)-lipoate is required as a cofactor.

In terms of biological role, the glycine cleavage system catalyzes the degradation of glycine. The H protein shuttles the methylamine group of glycine from the P protein to the T protein. This Clostridioides difficile (strain 630) (Peptoclostridium difficile) protein is Glycine cleavage system H protein.